Reading from the N-terminus, the 313-residue chain is Protein-methionine-sulfoxide reductase catalytic subunit MsrP (313 aa).

Positions 1–46 form a signal peptide, tat-type signal; that stretch reads MPSYRAPKIAAAEITPERFFLDRRTFIAAAAGSLALSVPKPSRAAA. Mo-molybdopterin is bound by residues asparagine 70, 73–74, cysteine 127, threonine 162, asparagine 212, arginine 217, and 228–230; these read YE and GIK.

This sequence belongs to the MsrP family. In terms of assembly, heterodimer of a catalytic subunit (MsrP) and a heme-binding subunit (MsrQ). Requires Mo-molybdopterin as cofactor. Predicted to be exported by the Tat system. The position of the signal peptide cleavage has not been experimentally proven.

It is found in the periplasm. The catalysed reaction is L-methionyl-[protein] + a quinone + H2O = L-methionyl-(S)-S-oxide-[protein] + a quinol. The enzyme catalyses L-methionyl-[protein] + a quinone + H2O = L-methionyl-(R)-S-oxide-[protein] + a quinol. Part of the MsrPQ system that repairs oxidized periplasmic proteins containing methionine sulfoxide residues (Met-O), using respiratory chain electrons. Thus protects these proteins from oxidative-stress damage caused by reactive species of oxygen and chlorine generated by the host defense mechanisms. MsrPQ is essential for the maintenance of envelope integrity under bleach stress, rescuing a wide series of structurally unrelated periplasmic proteins from methionine oxidation. The catalytic subunit MsrP is non-stereospecific, being able to reduce both (R-) and (S-) diastereoisomers of methionine sulfoxide. The sequence is that of Protein-methionine-sulfoxide reductase catalytic subunit MsrP from Rhizobium meliloti (strain 1021) (Ensifer meliloti).